Reading from the N-terminus, the 246-residue chain is Ribonuclease PH (246 aa).

Phosphate-binding positions include Arg-91 and Gly-129–Arg-131.

This sequence belongs to the RNase PH family. As to quaternary structure, homohexameric ring arranged as a trimer of dimers.

It catalyses the reaction tRNA(n+1) + phosphate = tRNA(n) + a ribonucleoside 5'-diphosphate. Functionally, phosphorolytic 3'-5' exoribonuclease that plays an important role in tRNA 3'-end maturation. Removes nucleotide residues following the 3'-CCA terminus of tRNAs; can also add nucleotides to the ends of RNA molecules by using nucleoside diphosphates as substrates, but this may not be physiologically important. Probably plays a role in initiation of 16S rRNA degradation (leading to ribosome degradation) during starvation. This Burkholderia ambifaria (strain MC40-6) protein is Ribonuclease PH.